A 309-amino-acid polypeptide reads, in one-letter code: Aspartate carbamoyltransferase catalytic subunit (309 aa).

Residues Arg-58 and Thr-59 each coordinate carbamoyl phosphate. Residue Lys-86 participates in L-aspartate binding. Positions 108, 136, and 139 each coordinate carbamoyl phosphate. Residues Arg-169 and Arg-223 each coordinate L-aspartate. Gly-265 and Pro-266 together coordinate carbamoyl phosphate.

The protein belongs to the aspartate/ornithine carbamoyltransferase superfamily. ATCase family. In terms of assembly, heterododecamer (2C3:3R2) of six catalytic PyrB chains organized as two trimers (C3), and six regulatory PyrI chains organized as three dimers (R2).

The enzyme catalyses carbamoyl phosphate + L-aspartate = N-carbamoyl-L-aspartate + phosphate + H(+). It functions in the pathway pyrimidine metabolism; UMP biosynthesis via de novo pathway; (S)-dihydroorotate from bicarbonate: step 2/3. Catalyzes the condensation of carbamoyl phosphate and aspartate to form carbamoyl aspartate and inorganic phosphate, the committed step in the de novo pyrimidine nucleotide biosynthesis pathway. This Akkermansia muciniphila (strain ATCC BAA-835 / DSM 22959 / JCM 33894 / BCRC 81048 / CCUG 64013 / CIP 107961 / Muc) protein is Aspartate carbamoyltransferase catalytic subunit.